A 2359-amino-acid polypeptide reads, in one-letter code: Pre-mRNA-processing-splicing factor 8A (2359 aa).

The tract at residues 1 to 54 is disordered; sequence MWNNNDGMPLAPPGTGGSMMPPPPAAHPSYTALPPPSNPTPPVEPTPEEAEAKL. Pro residues predominate over residues 33 to 45; sequence LPPPSNPTPPVEP. The region spanning 2127–2258 is the MPN domain; that stretch reads TYIMPKNILK…LTSYKLTQTG (132 aa).

As to quaternary structure, interacts with CLO.

It localises to the nucleus. In terms of biological role, functions as a scaffold that mediates the ordered assembly of spliceosomal proteins and snRNAs. Required for the assembly of the U4/U6-U5 tri-snRNP complex. Required for embryo development. Required for splicing efficiency of COOLAIR introns and usage of the proximal poly(A) site. COOLAIR is a set of long non-coding antisense transcripts produced at the FLOWERING LOCUS C (FLC). COOLAIR initiates just downstream of the major sense transcript poly(A) site and terminates either early or extends into the FLC promoter region. Splicing of COOLAIR by PRP8A is functionally important for FLC regulation. The sequence is that of Pre-mRNA-processing-splicing factor 8A from Arabidopsis thaliana (Mouse-ear cress).